The chain runs to 332 residues: Glycerol-3-phosphate dehydrogenase [NAD(P)+] (332 aa).

Ser11, Trp12, Arg32, Arg33, and Lys106 together coordinate NADPH. Sn-glycerol 3-phosphate contacts are provided by Lys106 and Gly136. Ala140 is a binding site for NADPH. Sn-glycerol 3-phosphate is bound by residues Lys191, Asp244, Ser254, Arg255, and Asn256. Lys191 acts as the Proton acceptor in catalysis. Arg255 is an NADPH binding site. Val280 and Glu282 together coordinate NADPH.

It belongs to the NAD-dependent glycerol-3-phosphate dehydrogenase family.

The protein resides in the cytoplasm. The catalysed reaction is sn-glycerol 3-phosphate + NAD(+) = dihydroxyacetone phosphate + NADH + H(+). It carries out the reaction sn-glycerol 3-phosphate + NADP(+) = dihydroxyacetone phosphate + NADPH + H(+). Its pathway is membrane lipid metabolism; glycerophospholipid metabolism. Catalyzes the reduction of the glycolytic intermediate dihydroxyacetone phosphate (DHAP) to sn-glycerol 3-phosphate (G3P), the key precursor for phospholipid synthesis. The chain is Glycerol-3-phosphate dehydrogenase [NAD(P)+] from Corynebacterium kroppenstedtii (strain DSM 44385 / JCM 11950 / CIP 105744 / CCUG 35717).